We begin with the raw amino-acid sequence, 223 residues long: DNA-directed RNA polymerase III subunit RPC7 (223 aa).

Residues M111 to S124 are compositionally biased toward basic and acidic residues. The disordered stretch occupies residues M111–Y223. A Phosphothreonine modification is found at T134. A compositionally biased stretch (basic and acidic residues) spans K144–E156. S158 bears the Phosphoserine mark. Acidic residues-rich tracts occupy residues K173 to D198 and N206 to Y223.

This sequence belongs to the eukaryotic RPC7 RNA polymerase subunit family. Component of the RNA polymerase III complex consisting of 17 subunits: a ten-subunit horseshoe-shaped catalytic core composed of POLR3A/RPC1, POLR3B/RPC2, POLR1C/RPAC1, POLR1D/RPAC2, POLR3K/RPC10, POLR2E/RPABC1, POLR2F/RPABC2, POLR2H/RPABC3, POLR2K/RPABC4 and POLR2L/RPABC5; a mobile stalk composed of two subunits POLR3H/RPC8 and CRCP/RPC9, protruding from the core and functioning primarily in transcription initiation; and additional subunits homologous to general transcription factors of the RNA polymerase II machinery, POLR3C/RPC3-POLR3F/RPC6-POLR3G/RPC7 heterotrimer required for transcription initiation and POLR3D/RPC4-POLR3E/RPC5 heterodimer involved in both transcription initiation and termination. Directly interacts with POLR3C/RPC62. Also found in a trimeric complex with POLR3C/RPC3 and POLR3GL. Expressed at low levels in the liver.

Its subcellular location is the nucleus. The protein localises to the cytoplasm. Its function is as follows. DNA-dependent RNA polymerase catalyzes the transcription of DNA into RNA using the four ribonucleoside triphosphates as substrates. Specific peripheric component of RNA polymerase III (Pol III) which synthesizes small non-coding RNAs including 5S rRNA, snRNAs, tRNAs and miRNAs from at least 500 distinct genomic loci. Acts as a long tether that bridges POLR3C/RPC3-POLR3F/RPC6-POLR3G/RPC7 heterotrimer and the mobile stalk of Pol III, coordinating the dynamics of Pol III stalk and clamp modules during the transition from apo to elongation state. Pol III exists as two alternative complexes defined by the mutually exclusive incorporation of subunit POLR3G/RPC7alpha or POLR3GL/RPC7beta. POLR3G/RPC7alpha modulates Pol III transcriptome by specifically enhancing the transcription of snaR-A non-coding RNAs. At resting state, occupies the active site of apo Pol III and keeps Pol III in an autoinhibitory mode, preventing non-specific transcription. Pol III plays a key role in sensing and limiting infection by intracellular bacteria and DNA viruses. Acts as a nuclear and cytosolic DNA sensor involved in innate immune response. Can sense non-self dsDNA that serves as template for transcription into dsRNA. The non-self RNA polymerase III transcripts, such as Epstein-Barr virus-encoded RNAs (EBERs), induce type I interferon and NF-kappa-B through the RIG-I pathway. In Mus musculus (Mouse), this protein is DNA-directed RNA polymerase III subunit RPC7 (Polr3g).